The primary structure comprises 319 residues: Pantothenate kinase (319 aa).

An ATP-binding site is contributed by 97–104; it reads GSVAVGKS.

This sequence belongs to the prokaryotic pantothenate kinase family.

It is found in the cytoplasm. It carries out the reaction (R)-pantothenate + ATP = (R)-4'-phosphopantothenate + ADP + H(+). It participates in cofactor biosynthesis; coenzyme A biosynthesis; CoA from (R)-pantothenate: step 1/5. The chain is Pantothenate kinase from Mesorhizobium japonicum (strain LMG 29417 / CECT 9101 / MAFF 303099) (Mesorhizobium loti (strain MAFF 303099)).